The chain runs to 285 residues: Small ribosomal subunit protein mS23 (285 aa).

It belongs to the mitochondrion-specific ribosomal protein mS23 family. In terms of assembly, component of the mitochondrial small ribosomal subunit.

Its subcellular location is the mitochondrion. This Debaryomyces hansenii (strain ATCC 36239 / CBS 767 / BCRC 21394 / JCM 1990 / NBRC 0083 / IGC 2968) (Yeast) protein is Small ribosomal subunit protein mS23 (RSM25).